Consider the following 824-residue polypeptide: Leucine--tRNA ligase (824 aa).

Positions 41 to 51 (PYPSGTLHVGH) match the 'HIGH' region motif. Residues 580-584 (KMSKS) carry the 'KMSKS' region motif. Lys-583 provides a ligand contact to ATP.

Belongs to the class-I aminoacyl-tRNA synthetase family.

Its subcellular location is the cytoplasm. It carries out the reaction tRNA(Leu) + L-leucine + ATP = L-leucyl-tRNA(Leu) + AMP + diphosphate. The chain is Leucine--tRNA ligase from Thermotoga maritima (strain ATCC 43589 / DSM 3109 / JCM 10099 / NBRC 100826 / MSB8).